Consider the following 176-residue polypeptide: ATP synthase subunit b (176 aa).

Residues 18–38 form a helical membrane-spanning segment; it reads GVEWGTVIVTVITFAILLALL.

Belongs to the ATPase B chain family. In terms of assembly, F-type ATPases have 2 components, F(1) - the catalytic core - and F(0) - the membrane proton channel. F(1) has five subunits: alpha(3), beta(3), gamma(1), delta(1), epsilon(1). F(0) has three main subunits: a(1), b(2) and c(10-14). The alpha and beta chains form an alternating ring which encloses part of the gamma chain. F(1) is attached to F(0) by a central stalk formed by the gamma and epsilon chains, while a peripheral stalk is formed by the delta and b chains.

The protein resides in the cell membrane. F(1)F(0) ATP synthase produces ATP from ADP in the presence of a proton or sodium gradient. F-type ATPases consist of two structural domains, F(1) containing the extramembraneous catalytic core and F(0) containing the membrane proton channel, linked together by a central stalk and a peripheral stalk. During catalysis, ATP synthesis in the catalytic domain of F(1) is coupled via a rotary mechanism of the central stalk subunits to proton translocation. In terms of biological role, component of the F(0) channel, it forms part of the peripheral stalk, linking F(1) to F(0). The protein is ATP synthase subunit b of Staphylococcus haemolyticus (strain JCSC1435).